The chain runs to 650 residues: MQAERPLWVPDREIVERSPMAEFIDWCGERFGRSFADYDAFHDWSVSERGAFWTAVWEHCKVIGESGEKALVDGDRMLDARFFPEARLNFAENLLRKTGSGDALIFRGEDKVSYRLTWDELRALVSRLQQALRAQGIGAGDRVAAMMPNMPETIALMLATASVGAIWSSCSPDFGEQGVLDRFGQIAPKLFIVCDGYWYNGKRQDVDSKVRAVAKSLGAPTVIVPYAGDSAALAPTVEGGVTLADFIAGFQAGPLVFERLPFGHPLYILFSSGTTGVPKCIVHSAGGTLLQHLKEHRFHCGLRDGERLFYFTTCGWMMWNWLASGLAVGATLCLYDGSPFCPDGNVLFDYAAAERFAVFGTSAKYIDAVRKGGFTPARTHDLSSLRLMTSTGSPLSPEGFSFVYEGIKPDVQLASISGGTDIVSCFVLGNPLKPVWRGEIQGPGLGLAVDVWNDEGKPVRGEKGELVCTRAFPSMPVMFWNDPDGAKYRAAYFDRFDNVWCHGDFAEWTPHGGIVIHGRSDATLNPGGVRIGTAEIYNQVEQMDEVAEALCIGQDWEDDVRVVLFVRLARGVELTEALTREIKNRIRSGASPRHVPAKIIAVADIPRTKSGKIVELAVRDVVHGRPVKNKEALANPEALDLFAGLEELKS.

199–202 (YNGK) is a CoA binding site. ATP contacts are provided by residues 392–394 (GSP), D504, R519, and R530. V546 contributes to the Mg(2+) binding site. Residue R587 participates in CoA binding. Position 612 is an N6-acetyllysine (K612).

It belongs to the ATP-dependent AMP-binding enzyme family. The cofactor is Mg(2+). Acetylated. Deacetylation by the SIR2-homolog deacetylase activates the enzyme.

It catalyses the reaction acetoacetate + ATP + CoA = acetoacetyl-CoA + AMP + diphosphate. The protein operates within biopolymer metabolism; poly-(R)-3-hydroxybutanoate degradation. Functionally, catalyzes the conversion of acetoacetate into acetoacetyl-CoA. Is involved in poly-3-hydroxybutyrate (PHB) degradation, which allows growth of R.meliloti on PHB cycle intermediates. This Rhizobium meliloti (strain 1021) (Ensifer meliloti) protein is Acetoacetyl-coenzyme A synthetase.